Consider the following 376-residue polypeptide: Nucleoside diphosphate kinase homolog 7 (376 aa).

Residues 3 to 91 enclose the DM10 domain; sequence HSERFVFIAE…YTARQLGSRK (89 aa).

It belongs to the NDK family. Component of sperm flagellar doublet microtubules. Component of the gamma-tubulin ring complex. Undergoes autophosphorylation. As to expression, expressed in airway epithelial cells.

It localises to the cytoplasm. It is found in the cytoskeleton. Its subcellular location is the microtubule organizing center. The protein localises to the centrosome. The protein resides in the nucleus. It localises to the spindle. It is found in the cilium axoneme. Its subcellular location is the flagellum axoneme. The protein localises to the cell projection. The protein resides in the cilium. Possesses an intrinsic kinase activity. Displays 3'-5' exonuclease activity with a preference for single-stranded DNA. Does not seem to have nucleoside diphosphate kinase activity. Functional component of the gamma-tubulin ring complex, implicated in the regulation of the microtubule-nucleating activity of the gamma-tubulin ring complex in centrosomes, in a kinase activity-dependent manner. Part of the dynein-decorated doublet microtubules (DMTs) in cilia axoneme, which is required for motile cilia beating. This chain is Nucleoside diphosphate kinase homolog 7, found in Homo sapiens (Human).